We begin with the raw amino-acid sequence, 364 residues long: tRNA 2-selenouridine synthase (364 aa).

Positions L14–I137 constitute a Rhodanese domain. C97 acts as the S-selanylcysteine intermediate in catalysis.

It belongs to the SelU family. In terms of assembly, monomer.

It catalyses the reaction 5-methylaminomethyl-2-thiouridine(34) in tRNA + selenophosphate + (2E)-geranyl diphosphate + H2O + H(+) = 5-methylaminomethyl-2-selenouridine(34) in tRNA + (2E)-thiogeraniol + phosphate + diphosphate. The catalysed reaction is 5-methylaminomethyl-2-thiouridine(34) in tRNA + (2E)-geranyl diphosphate = 5-methylaminomethyl-S-(2E)-geranyl-thiouridine(34) in tRNA + diphosphate. It carries out the reaction 5-methylaminomethyl-S-(2E)-geranyl-thiouridine(34) in tRNA + selenophosphate + H(+) = 5-methylaminomethyl-2-(Se-phospho)selenouridine(34) in tRNA + (2E)-thiogeraniol. The enzyme catalyses 5-methylaminomethyl-2-(Se-phospho)selenouridine(34) in tRNA + H2O = 5-methylaminomethyl-2-selenouridine(34) in tRNA + phosphate. Functionally, involved in the post-transcriptional modification of the uridine at the wobble position (U34) of tRNA(Lys), tRNA(Glu) and tRNA(Gln). Catalyzes the conversion of 2-thiouridine (S2U-RNA) to 2-selenouridine (Se2U-RNA). Acts in a two-step process involving geranylation of 2-thiouridine (S2U) to S-geranyl-2-thiouridine (geS2U) and subsequent selenation of the latter derivative to 2-selenouridine (Se2U) in the tRNA chain. This is tRNA 2-selenouridine synthase from Escherichia coli (strain SE11).